Consider the following 643-residue polypeptide: 1-deoxy-D-xylulose-5-phosphate synthase (643 aa).

Thiamine diphosphate contacts are provided by residues histidine 72 and 113–115 (GHA). Aspartate 144 contributes to the Mg(2+) binding site. Thiamine diphosphate is bound by residues 145-146 (GA), asparagine 174, tyrosine 287, and glutamate 370. Residue asparagine 174 coordinates Mg(2+).

This sequence belongs to the transketolase family. DXPS subfamily. In terms of assembly, homodimer. The cofactor is Mg(2+). Requires thiamine diphosphate as cofactor.

It catalyses the reaction D-glyceraldehyde 3-phosphate + pyruvate + H(+) = 1-deoxy-D-xylulose 5-phosphate + CO2. Its pathway is metabolic intermediate biosynthesis; 1-deoxy-D-xylulose 5-phosphate biosynthesis; 1-deoxy-D-xylulose 5-phosphate from D-glyceraldehyde 3-phosphate and pyruvate: step 1/1. Catalyzes the acyloin condensation reaction between C atoms 2 and 3 of pyruvate and glyceraldehyde 3-phosphate to yield 1-deoxy-D-xylulose-5-phosphate (DXP). This chain is 1-deoxy-D-xylulose-5-phosphate synthase, found in Synechococcus sp. (strain CC9605).